A 304-amino-acid chain; its full sequence is Dihydroorotate dehydrogenase B (NAD(+)), catalytic subunit (304 aa).

FMN contacts are provided by residues Ser-21 and 45-46 (KA). Residues Lys-45 and 69-73 (NAIGL) contribute to the substrate site. FMN contacts are provided by Asn-99 and Asn-127. Position 127 (Asn-127) interacts with substrate. Cys-130 serves as the catalytic Nucleophile. Residues Lys-165 and Ile-191 each coordinate FMN. Residue 192 to 193 (NT) coordinates substrate. Residues Gly-217, 243-244 (GG), and 265-266 (GT) contribute to the FMN site.

Belongs to the dihydroorotate dehydrogenase family. Type 1 subfamily. Heterotetramer of 2 PyrK and 2 PyrD type B subunits. It depends on FMN as a cofactor.

It localises to the cytoplasm. The catalysed reaction is (S)-dihydroorotate + NAD(+) = orotate + NADH + H(+). The protein operates within pyrimidine metabolism; UMP biosynthesis via de novo pathway; orotate from (S)-dihydroorotate (NAD(+) route): step 1/1. Its function is as follows. Catalyzes the conversion of dihydroorotate to orotate with NAD(+) as electron acceptor. The polypeptide is Dihydroorotate dehydrogenase B (NAD(+)), catalytic subunit (pyrD) (Listeria monocytogenes serotype 4a (strain HCC23)).